A 140-amino-acid polypeptide reads, in one-letter code: UPF0336 protein TW736 (140 aa).

This sequence belongs to the UPF0336 family.

The polypeptide is UPF0336 protein TW736 (Tropheryma whipplei (strain TW08/27) (Whipple's bacillus)).